A 608-amino-acid chain; its full sequence is Phosphogluconate dehydratase (608 aa).

2 residues coordinate [4Fe-4S] cluster: cysteine 154 and cysteine 221.

It belongs to the IlvD/Edd family. [4Fe-4S] cluster serves as cofactor.

It catalyses the reaction 6-phospho-D-gluconate = 2-dehydro-3-deoxy-6-phospho-D-gluconate + H2O. It participates in carbohydrate metabolism; Entner-Doudoroff pathway. Functionally, catalyzes the dehydration of 6-phospho-D-gluconate to 2-dehydro-3-deoxy-6-phospho-D-gluconate. The sequence is that of Phosphogluconate dehydratase from Helicobacter pylori (strain J99 / ATCC 700824) (Campylobacter pylori J99).